A 429-amino-acid chain; its full sequence is Glutamate-1-semialdehyde 2,1-aminomutase (429 aa).

An N6-(pyridoxal phosphate)lysine modification is found at Lys-265.

This sequence belongs to the class-III pyridoxal-phosphate-dependent aminotransferase family. HemL subfamily. As to quaternary structure, homodimer. It depends on pyridoxal 5'-phosphate as a cofactor.

It localises to the cytoplasm. The catalysed reaction is (S)-4-amino-5-oxopentanoate = 5-aminolevulinate. Its pathway is porphyrin-containing compound metabolism; protoporphyrin-IX biosynthesis; 5-aminolevulinate from L-glutamyl-tRNA(Glu): step 2/2. This Azotobacter vinelandii (strain DJ / ATCC BAA-1303) protein is Glutamate-1-semialdehyde 2,1-aminomutase.